Here is a 94-residue protein sequence, read N- to C-terminus: Small ribosomal subunit protein uS19 (94 aa).

Belongs to the universal ribosomal protein uS19 family.

Protein S19 forms a complex with S13 that binds strongly to the 16S ribosomal RNA. The protein is Small ribosomal subunit protein uS19 of Acidobacterium capsulatum (strain ATCC 51196 / DSM 11244 / BCRC 80197 / JCM 7670 / NBRC 15755 / NCIMB 13165 / 161).